We begin with the raw amino-acid sequence, 408 residues long: Cytochrome P450 55A3 (408 aa).

C357 is a binding site for heme.

It belongs to the cytochrome P450 family. It depends on heme as a cofactor.

This is Cytochrome P450 55A3 (CYP55A3) from Fusarium lichenicola (Cylindrocarpon lichenicola).